The sequence spans 545 residues: MTTKYIFVTGGVVSSLGKGIAAGSLAAILEARGLDVTILKLDPYINVDPGTMSPIQHGEVFVTDDGAETDLDLGHYERYIRTRMTARNNFTTGRVYSEVMAKERRGDYLGATIQVIPHITNEIQERIVAGGKGHDIAIVELGGTVGDIESQPFLEAIRQLGLKVGRDSVIYMHLTLLPYLKTAGEVKTKPTQHSVKELRSLGIQPDILVCRSEVNIPINERVKIALFCNVTEKSVILLRDVDSIYKIPALLKAQGLDEICVKRFGLDCPEADLSEWAQVVSEEANTSNEVIIGMVGKYTELPDAYKSVNEALKHGGLKNAASVKIKYIDSQDVEVRGVSILEGVDAILVPGGFGERGIEGKILAAQYARVNKIPYLGICLGMQVAIIEFARNVAGLKNAHSTEFEANCDQPVVGLITEWLDKTGEVEQRTENSDLGGTMRVGAQLCHLKKGSKVFDMYGTKEIFERHRHRYEVNNNLLPILEKAGLVVTGLSEDKKLVEIIEIPNHPWFVASQFHPEFTSTPRDGHPLFKGFIKSAIDHQQGRFE.

The segment at 1–266 (MTTKYIFVTG…DEICVKRFGL (266 aa)) is amidoligase domain. S14 is a binding site for CTP. Residue S14 coordinates UTP. Residues 15–20 (SLGKGI) and D72 each bind ATP. Positions 72 and 140 each coordinate Mg(2+). CTP is bound by residues 147–149 (DIE), 187–192 (KTKPTQ), and K223. UTP is bound by residues 187–192 (KTKPTQ) and K223. ATP is bound at residue 239–241 (RDV). The region spanning 291-542 (IIGMVGKYTE…IKSAIDHQQG (252 aa)) is the Glutamine amidotransferase type-1 domain. An L-glutamine-binding site is contributed by G352. C379 serves as the catalytic Nucleophile; for glutamine hydrolysis. Residues 380 to 383 (LGMQ), E403, and R470 each bind L-glutamine. Active-site residues include H515 and E517.

Belongs to the CTP synthase family. Homotetramer.

It catalyses the reaction UTP + L-glutamine + ATP + H2O = CTP + L-glutamate + ADP + phosphate + 2 H(+). It carries out the reaction L-glutamine + H2O = L-glutamate + NH4(+). The catalysed reaction is UTP + NH4(+) + ATP = CTP + ADP + phosphate + 2 H(+). The protein operates within pyrimidine metabolism; CTP biosynthesis via de novo pathway; CTP from UDP: step 2/2. Allosterically activated by GTP, when glutamine is the substrate; GTP has no effect on the reaction when ammonia is the substrate. The allosteric effector GTP functions by stabilizing the protein conformation that binds the tetrahedral intermediate(s) formed during glutamine hydrolysis. Inhibited by the product CTP, via allosteric rather than competitive inhibition. Functionally, catalyzes the ATP-dependent amination of UTP to CTP with either L-glutamine or ammonia as the source of nitrogen. Regulates intracellular CTP levels through interactions with the four ribonucleotide triphosphates. The chain is CTP synthase from Psychromonas ingrahamii (strain DSM 17664 / CCUG 51855 / 37).